The chain runs to 427 residues: Glutamate-1-semialdehyde 2,1-aminomutase 1 (427 aa).

Lys267 is modified (N6-(pyridoxal phosphate)lysine).

Belongs to the class-III pyridoxal-phosphate-dependent aminotransferase family. HemL subfamily. Homodimer. Pyridoxal 5'-phosphate serves as cofactor.

The protein resides in the cytoplasm. The catalysed reaction is (S)-4-amino-5-oxopentanoate = 5-aminolevulinate. It functions in the pathway porphyrin-containing compound metabolism; protoporphyrin-IX biosynthesis; 5-aminolevulinate from L-glutamyl-tRNA(Glu): step 2/2. The chain is Glutamate-1-semialdehyde 2,1-aminomutase 1 from Macrococcus caseolyticus (strain JCSC5402) (Macrococcoides caseolyticum).